The sequence spans 447 residues: Membrane metalloprotease ARASP, chloroplastic (447 aa).

The transit peptide at 1–73 (MLLNISSSPI…YPDGERFDFR (73 aa)) directs the protein to the chloroplast. Zn(2+) is bound at residue histidine 102. The active site involves glutamate 103. Histidine 106 is a Zn(2+) binding site. The helical transmembrane segment at 177–197 (SIVVSAGIIANVIFAYAIIFV) threads the bilayer. The PDZ domain occupies 202–244 (VGLPVQEAFPGVLVPEVKTFSAASRDGLLSGDVILAVDGTELS). A run of 2 helical transmembrane segments spans residues 379-399 (LAVINLLPLPALDGGTLALIL) and 413-433 (VEQGIMSSGIMLVIFLGLFLI).

Belongs to the peptidase M50A family. Requires Zn(2+) as cofactor. Expressed in green seedlings and cotyledons. Low levels of expression in roots, siliques and seeds.

The protein localises to the plastid. It localises to the chloroplast inner membrane. Metalloprotease essential for chloroplast and plant development. May be involved in regulated intramembrane proteolysis (RIP). In Arabidopsis thaliana (Mouse-ear cress), this protein is Membrane metalloprotease ARASP, chloroplastic.